We begin with the raw amino-acid sequence, 139 residues long: Large ribosomal subunit protein uL16 (139 aa).

It belongs to the universal ribosomal protein uL16 family. As to quaternary structure, part of the 50S ribosomal subunit.

Functionally, binds 23S rRNA and is also seen to make contacts with the A and possibly P site tRNAs. This is Large ribosomal subunit protein uL16 from Chlorobium chlorochromatii (strain CaD3).